The primary structure comprises 328 residues: Probable D,D-dipeptide transport ATP-binding protein DdpD (328 aa).

Residues 6 to 257 (LDIQQLHLSF…PRHPYTIGLL (252 aa)) enclose the ABC transporter domain. 42-49 (GESGSGKS) provides a ligand contact to ATP.

It belongs to the ABC transporter superfamily. In terms of assembly, the complex is composed of two ATP-binding proteins (DdpD and DdpF), two transmembrane proteins (DdpB and DdpC) and a solute-binding protein (DdpA).

The protein localises to the cell inner membrane. Its function is as follows. Part of the ABC transporter complex DdpABCDF, which is probably involved in D,D-dipeptide transport. Probably responsible for energy coupling to the transport system. The protein is Probable D,D-dipeptide transport ATP-binding protein DdpD of Escherichia coli (strain K12).